The primary structure comprises 195 residues: Dephospho-CoA kinase (195 aa).

The DPCK domain maps to Ile-4–Leu-195. Ala-12–Thr-17 serves as a coordination point for ATP.

The protein belongs to the CoaE family.

The protein localises to the cytoplasm. It carries out the reaction 3'-dephospho-CoA + ATP = ADP + CoA + H(+). It functions in the pathway cofactor biosynthesis; coenzyme A biosynthesis; CoA from (R)-pantothenate: step 5/5. Functionally, catalyzes the phosphorylation of the 3'-hydroxyl group of dephosphocoenzyme A to form coenzyme A. This chain is Dephospho-CoA kinase, found in Streptococcus agalactiae serotype III (strain NEM316).